A 254-amino-acid chain; its full sequence is Enolase-phosphatase E1 (254 aa).

Residues Asp13 and Glu15 each contribute to the Mg(2+) site. Substrate-binding positions include 127-128 (SS) and Lys173. A Mg(2+)-binding site is contributed by Asp200.

It belongs to the HAD-like hydrolase superfamily. MasA/MtnC family. As to quaternary structure, monomer. Requires Mg(2+) as cofactor.

It localises to the cytoplasm. The protein localises to the nucleus. The catalysed reaction is 5-methylsulfanyl-2,3-dioxopentyl phosphate + H2O = 1,2-dihydroxy-5-(methylsulfanyl)pent-1-en-3-one + phosphate. The protein operates within amino-acid biosynthesis; L-methionine biosynthesis via salvage pathway; L-methionine from S-methyl-5-thio-alpha-D-ribose 1-phosphate: step 3/6. Its pathway is amino-acid biosynthesis; L-methionine biosynthesis via salvage pathway; L-methionine from S-methyl-5-thio-alpha-D-ribose 1-phosphate: step 4/6. Its function is as follows. Bifunctional enzyme that catalyzes the enolization of 2,3-diketo-5-methylthiopentyl-1-phosphate (DK-MTP-1-P) into the intermediate 2-hydroxy-3-keto-5-methylthiopentenyl-1-phosphate (HK-MTPenyl-1-P), which is then dephosphorylated to form the acireductone 1,2-dihydroxy-3-keto-5-methylthiopentene (DHK-MTPene). This chain is Enolase-phosphatase E1 (utr4), found in Sclerotinia sclerotiorum (strain ATCC 18683 / 1980 / Ss-1) (White mold).